The following is a 290-amino-acid chain: 4-hydroxybenzoate octaprenyltransferase (290 aa).

The next 8 membrane-spanning stretches (helical) occupy residues 21–41 (IGTL…VKGM), 44–64 (LSIL…GCVI), 84–104 (LATG…LVFC), 106–126 (FILV…AVFL), 142–162 (LFLG…SIEA), 212–232 (IISL…YLSQ), 235–255 (TSYF…CKLI), and 267–287 (FLNN…GIFF).

Belongs to the UbiA prenyltransferase family. Mg(2+) is required as a cofactor.

The protein resides in the cell inner membrane. The catalysed reaction is all-trans-octaprenyl diphosphate + 4-hydroxybenzoate = 4-hydroxy-3-(all-trans-octaprenyl)benzoate + diphosphate. It functions in the pathway cofactor biosynthesis; ubiquinone biosynthesis. In terms of biological role, catalyzes the prenylation of para-hydroxybenzoate (PHB) with an all-trans polyprenyl group. Mediates the second step in the final reaction sequence of ubiquinone-8 (UQ-8) biosynthesis, which is the condensation of the polyisoprenoid side chain with PHB, generating the first membrane-bound Q intermediate 3-octaprenyl-4-hydroxybenzoate. This Pasteurella multocida (strain Pm70) protein is 4-hydroxybenzoate octaprenyltransferase.